Here is a 486-residue protein sequence, read N- to C-terminus: Keratin, type II cuticular Hb6 (486 aa).

The head stretch occupies residues 1–106 (MTCGSYCGGR…PNAQCVKHEE (106 aa)). In terms of domain architecture, IF rod spans 106 to 417 (EKEQIKCLNS…RLLEGEEQRL (312 aa)). The coil 1A stretch occupies residues 107 to 141 (KEQIKCLNSKFAAFIDKVRFLEQQNKLLETKWQFY). The segment at 142-151 (QNRKCCESNM) is linker 1. The segment at 152-252 (EPLFEGYIEA…YDEETRILHS (101 aa)) is coil 1B. K212 participates in a covalent cross-link: Glycyl lysine isopeptide (Lys-Gly) (interchain with G-Cter in SUMO1). The tract at residues 253-269 (HISDTSIVVKMDNSRDL) is linker 12. Residues 270 to 413 (NMDCVVAEIK…TTYRRLLEGE (144 aa)) are coil 2. The interval 414–486 (EQRLCEGVGS…GACSGGCKKC (73 aa)) is tail.

The protein belongs to the intermediate filament family. In terms of assembly, heterotetramer of two type I and two type II keratins.

The protein is Keratin, type II cuticular Hb6 (Krt86) of Mus musculus (Mouse).